The sequence spans 573 residues: Probable pectinesterase/pectinesterase inhibitor 41 (573 aa).

Residues 1–22 form the signal peptide; that stretch reads MLSLKLFLVTLFLSLQTLFIAS. The pectinesterase inhibitor 41 stretch occupies residues 25–184; that stretch reads LLPSNSSSTI…TKLFSVSLAL (160 aa). Asn29, Asn119, Asn173, Asn264, Asn268, Asn281, and Asn320 each carry an N-linked (GlcNAc...) asparagine glycan. Positions 259 to 557 are pectinesterase 41; that stretch reads VTVNQNGTGN…FTVENFLLGD (299 aa). Thr336 contributes to the substrate binding site. Asn353 is a glycosylation site (N-linked (GlcNAc...) asparagine). Gln366 contacts substrate. The Proton donor; for pectinesterase activity role is filled by Asp389. Cys403 and Cys423 are disulfide-bonded. The Nucleophile; for pectinesterase activity role is filled by Asp410. 2 N-linked (GlcNAc...) asparagine glycosylation sites follow: Asn456 and Asn469. Arg478 and Trp480 together coordinate substrate. 3 N-linked (GlcNAc...) asparagine glycosylation sites follow: Asn520, Asn541, and Asn547.

This sequence in the N-terminal section; belongs to the PMEI family. It in the C-terminal section; belongs to the pectinesterase family. In terms of tissue distribution, expressed in flowers, siliques, floral stems and rosettes leaves.

Its subcellular location is the secreted. The protein resides in the cell wall. It catalyses the reaction [(1-&gt;4)-alpha-D-galacturonosyl methyl ester](n) + n H2O = [(1-&gt;4)-alpha-D-galacturonosyl](n) + n methanol + n H(+). It functions in the pathway glycan metabolism; pectin degradation; 2-dehydro-3-deoxy-D-gluconate from pectin: step 1/5. Functionally, acts in the modification of cell walls via demethylesterification of cell wall pectin. The sequence is that of Probable pectinesterase/pectinesterase inhibitor 41 (PME41) from Arabidopsis thaliana (Mouse-ear cress).